Reading from the N-terminus, the 486-residue chain is Glutamyl-tRNA(Gln) amidotransferase subunit A (486 aa).

Active-site charge relay system residues include Lys-78 and Ser-153. Catalysis depends on Ser-177, which acts as the Acyl-ester intermediate.

It belongs to the amidase family. GatA subfamily. As to quaternary structure, heterotrimer of A, B and C subunits.

The catalysed reaction is L-glutamyl-tRNA(Gln) + L-glutamine + ATP + H2O = L-glutaminyl-tRNA(Gln) + L-glutamate + ADP + phosphate + H(+). Functionally, allows the formation of correctly charged Gln-tRNA(Gln) through the transamidation of misacylated Glu-tRNA(Gln) in organisms which lack glutaminyl-tRNA synthetase. The reaction takes place in the presence of glutamine and ATP through an activated gamma-phospho-Glu-tRNA(Gln). In Ruminiclostridium cellulolyticum (strain ATCC 35319 / DSM 5812 / JCM 6584 / H10) (Clostridium cellulolyticum), this protein is Glutamyl-tRNA(Gln) amidotransferase subunit A.